Consider the following 644-residue polypeptide: Macrolide export ATP-binding/permease protein MacB (644 aa).

The ABC transporter domain maps to 7–245; sequence IELQDITRSF…IPETDQNGRR (239 aa). 43–50 is an ATP binding site; sequence GPSGSGKS. Helical transmembrane passes span 271–291, 526–546, 570–590, and 607–627; these read ALTLLGIVIGVASVITMLAIG, IAAISLLVGGIGVMNIMLVSV, FLTEAWLVSAIGGLIGVVIGI, and LLPMALAFGCAFATGLLFGFL.

It belongs to the ABC transporter superfamily. Macrolide exporter (TC 3.A.1.122) family. In terms of assembly, homodimer. Part of the tripartite efflux system MacAB-TolC, which is composed of an inner membrane transporter, MacB, a periplasmic membrane fusion protein, MacA, and an outer membrane component, TolC. The complex forms a large protein conduit and can translocate molecules across both the inner and outer membranes. Interacts with MacA.

The protein localises to the cell inner membrane. Functionally, part of the tripartite efflux system MacAB-TolC. MacB is a non-canonical ABC transporter that contains transmembrane domains (TMD), which form a pore in the inner membrane, and an ATP-binding domain (NBD), which is responsible for energy generation. Confers resistance against macrolides. This chain is Macrolide export ATP-binding/permease protein MacB, found in Marinobacter nauticus (strain ATCC 700491 / DSM 11845 / VT8) (Marinobacter aquaeolei).